We begin with the raw amino-acid sequence, 213 residues long: 2,3-bisphosphoglycerate-dependent phosphoglycerate mutase (213 aa).

Residues 8–15, 21–22, arginine 58, 84–87, lysine 95, 111–112, and 155–156 each bind substrate; these read RHGQSEWN, TG, ERNY, RR, and GN. Catalysis depends on histidine 9, which acts as the Tele-phosphohistidine intermediate. Glutamate 84 acts as the Proton donor/acceptor in catalysis.

This sequence belongs to the phosphoglycerate mutase family. BPG-dependent PGAM subfamily.

The enzyme catalyses (2R)-2-phosphoglycerate = (2R)-3-phosphoglycerate. It participates in carbohydrate degradation; glycolysis; pyruvate from D-glyceraldehyde 3-phosphate: step 3/5. Its function is as follows. Catalyzes the interconversion of 2-phosphoglycerate and 3-phosphoglycerate. In Cytophaga hutchinsonii (strain ATCC 33406 / DSM 1761 / CIP 103989 / NBRC 15051 / NCIMB 9469 / D465), this protein is 2,3-bisphosphoglycerate-dependent phosphoglycerate mutase.